We begin with the raw amino-acid sequence, 253 residues long: MMMKIVFKGKSSEYEIQRSCFCVDAFVIKDKIEERDGVDFITSNVDLLEFSDDSFTFEEIVKHFNICDTEDMIIVEDFDMKSNKDNQNQEDDIEHNILKSEKIIHENTKQTSMQFKNLKFFSRIFKNENFLSDFKESKQEVVTIKKHEKLEIFKNLSQEDQEISFVKIEILNYDSNEDSLSFNLDIFPSGMSYKYGILKGSMHIILQGKTSSTMLFPFLKSMIYKNKSENSSEKIFTLMINQKKHYKLIANLS.

This is an uncharacterized protein from Campylobacter jejuni subsp. jejuni serotype O:2 (strain ATCC 700819 / NCTC 11168).